The chain runs to 290 residues: Agroclavine dehydrogenase (290 aa).

This sequence belongs to the fgaFS/easG family. In terms of assembly, monomer.

The enzyme catalyses agroclavine + NADP(+) = didehydroagroclavine + NADPH + H(+). The protein operates within alkaloid biosynthesis; ergot alkaloid biosynthesis. In terms of biological role, agroclavine dehydrogenase; part of the gene cluster that mediates the biosynthesis of fungal ergot alkaloid. DmaW catalyzes the first step of ergot alkaloid biosynthesis by condensing dimethylallyl diphosphate (DMAP) and tryptophan to form 4-dimethylallyl-L-tryptophan. The second step is catalyzed by the methyltransferase easF that methylates 4-dimethylallyl-L-tryptophan in the presence of S-adenosyl-L-methionine, resulting in the formation of 4-dimethylallyl-L-abrine. The catalase easC and the FAD-dependent oxidoreductase easE then transform 4-dimethylallyl-L-abrine to chanoclavine-I which is further oxidized by easD in the presence of NAD(+), resulting in the formation of chanoclavine-I aldehyde. Agroclavine dehydrogenase easG then mediates the conversion of chanoclavine-I aldehyde to agroclavine via a non-enzymatic adduct reaction: the substrate is an iminium intermediate that is formed spontaneously from chanoclavine-I aldehyde in the presence of glutathione. The presence of easA is not required to complete this reaction. Further conversion of agroclavine to paspalic acid is a two-step process involving oxidation of agroclavine to elymoclavine and of elymoclavine to paspalic acid, the second step being performed by the elymoclavine oxidase cloA. Paspalic acid is then further converted to D-lysergic acid. Ergopeptines are assembled from D-lysergic acid and three different amino acids by the D-lysergyl-peptide-synthetases composed each of a monomudular and a trimodular nonribosomal peptide synthetase subunit. LpsB and lpsC encode the monomodular subunits responsible for D-lysergic acid activation and incorporation into the ergopeptine backbone. LpsA1 and A2 subunits encode the trimodular nonribosomal peptide synthetase assembling the tripeptide portion of ergopeptines. LpsA1 is responsible for formation of the major ergopeptine, ergotamine, and lpsA2 for alpha-ergocryptine, the minor ergopeptine of the total alkaloid mixture elaborated by C.purpurea. D-lysergyl-tripeptides are assembled by the nonribosomal peptide synthetases and released as N-(D-lysergyl-aminoacyl)-lactams. Cyclolization of the D-lysergyl-tripeptides is performed by the Fe(2+)/2-ketoglutarate-dependent dioxygenase easH which introduces a hydroxyl group into N-(D-lysergyl-aminoacyl)-lactam at alpha-C of the aminoacyl residue followed by spontaneous condensation with the terminal lactam carbonyl group. The sequence is that of Agroclavine dehydrogenase from Claviceps purpurea (Ergot fungus).